Reading from the N-terminus, the 282-residue chain is Acetyl-coenzyme A carboxylase carboxyl transferase subunit beta (282 aa).

Residues 25–282 (VWRKCPHCNE…SQMLRIFMKQ (258 aa)) enclose the CoA carboxyltransferase N-terminal domain. Zn(2+)-binding residues include Cys-29, Cys-32, Cys-48, and Cys-51. Residues 29–51 (CPHCNEIIYAKEIERNLNVCPKC) form a C4-type zinc finger.

This sequence belongs to the AccD/PCCB family. Acetyl-CoA carboxylase is a heterohexamer composed of biotin carboxyl carrier protein (AccB), biotin carboxylase (AccC) and two subunits each of ACCase subunit alpha (AccA) and ACCase subunit beta (AccD). Requires Zn(2+) as cofactor.

The protein localises to the cytoplasm. It carries out the reaction N(6)-carboxybiotinyl-L-lysyl-[protein] + acetyl-CoA = N(6)-biotinyl-L-lysyl-[protein] + malonyl-CoA. It participates in lipid metabolism; malonyl-CoA biosynthesis; malonyl-CoA from acetyl-CoA: step 1/1. Its function is as follows. Component of the acetyl coenzyme A carboxylase (ACC) complex. Biotin carboxylase (BC) catalyzes the carboxylation of biotin on its carrier protein (BCCP) and then the CO(2) group is transferred by the transcarboxylase to acetyl-CoA to form malonyl-CoA. The chain is Acetyl-coenzyme A carboxylase carboxyl transferase subunit beta from Syntrophotalea carbinolica (strain DSM 2380 / NBRC 103641 / GraBd1) (Pelobacter carbinolicus).